Here is a 64-residue protein sequence, read N- to C-terminus: Large ribosomal subunit protein bL35 (64 aa).

The interval 1–29 (MPKMKTHSGAKKRFKLTGSGKLRRQQANR) is disordered.

Belongs to the bacterial ribosomal protein bL35 family.

The polypeptide is Large ribosomal subunit protein bL35 (Pseudarthrobacter chlorophenolicus (strain ATCC 700700 / DSM 12829 / CIP 107037 / JCM 12360 / KCTC 9906 / NCIMB 13794 / A6) (Arthrobacter chlorophenolicus)).